The primary structure comprises 317 residues: Low affinity immunoglobulin gamma Fc region receptor II-a (317 aa).

An N-terminal signal peptide occupies residues 1 to 33 (MTMETQMSQNVCPRNLWLLQPLTVLLLLASADS). Residues 34-217 (QAAAPPKAVL…PSMGSSSPMG (184 aa)) are Extracellular-facing. 2 consecutive Ig-like C2-type domains span residues 39–118 (PKAV…VHLT) and 122–204 (EWLV…VTIT). Cystine bridges form between Cys-62/Cys-104 and Cys-143/Cys-187. Residues Asn-97 and Asn-178 are each glycosylated (N-linked (GlcNAc...) asparagine). Residues 218 to 240 (IIVAVVIATAVAAIVAAVVALIY) form a helical membrane-spanning segment. At 241–317 (CRKKRISANS…PPNDHVNSNN (77 aa)) the chain is on the cytoplasmic side. Tyr-288 and Tyr-304 each carry phosphotyrosine; by SRC-type Tyr-kinases. The interval 292-317 (NPRAPTDDDKNIYLTLPPNDHVNSNN) is disordered.

In terms of assembly, interacts with IGHG1. Interacts with INPP5D/SHIP1 and INPPL1/SHIP2, regulating its function. Interacts with APCS and FGR. Interacts with HCK. In terms of processing, phosphorylated by SRC-type Tyr-kinases such as LYN, BLK, FYN, HCK and SYK. As to expression, found on monocytes, neutrophils and eosinophil platelets.

The protein localises to the cell membrane. Binds to the Fc region of immunoglobulins gamma. Low affinity receptor. By binding to IgG it initiates cellular responses against pathogens and soluble antigens. Promotes phagocytosis of opsonized antigens. The sequence is that of Low affinity immunoglobulin gamma Fc region receptor II-a (FCGR2A) from Homo sapiens (Human).